The primary structure comprises 435 residues: Transmembrane protein 130 (435 aa).

An N-terminal signal peptide occupies residues 1 to 24 (MAQAVWSRLGRILWLACLLPWAPA). Residues 25-339 (GVAAGLYELN…IQVWPSRIQP (315 aa)) lie on the Extracellular side of the membrane. 3 N-linked (GlcNAc...) asparagine glycosylation sites follow: asparagine 34, asparagine 197, and asparagine 300. Residues 147 to 233 (WPSSYLTKTV…AVKQKTGDFS (87 aa)) enclose the PKD domain. A helical transmembrane segment spans residues 340–360 (AVFAFPCATLITVMLAFIMYM). Residues 361-435 (TLRNATQQKD…LYKSVKTYTV (75 aa)) lie on the Cytoplasmic side of the membrane.

It localises to the golgi apparatus membrane. This chain is Transmembrane protein 130 (TMEM130), found in Homo sapiens (Human).